An 801-amino-acid chain; its full sequence is Protein 4.1 (801 aa).

The tract at residues 1–187 is disordered; that stretch reads MTTEKGLLAE…GESKASHKVV (187 aa). The span at 45-58 shows a compositional bias: low complexity; it reads EQSQESPSTTSPST. Residues 88–107 are compositionally biased toward basic and acidic residues; that stretch reads SDEKEVELLGEKGQDQKDVD. Acidic residues predominate over residues 108-117; that stretch reads EGLGEQLEDD. Polar residues predominate over residues 141-151; the sequence is SLSSAETQPAQ. Residues 154-166 are compositionally biased toward acidic residues; that stretch reads QKEDQDPEADCED. Residues 167 to 182 are compositionally biased toward basic and acidic residues; the sequence is VEGKEPIKKPEGESKA. The FERM domain occupies 193–474; that stretch reads MRCKVTLLDD…EHHTFFRLTS (282 aa). The segment at 477 to 587 is hydrophilic; the sequence is SIPKHRFLSL…GMPNQRESPK (111 aa). The disordered stretch occupies residues 516 to 613; it reads RTGSKRASRS…DKVKDLEKTQ (98 aa). Over residues 563-577 the composition is skewed to basic and acidic residues; the sequence is RVEEMPKKTEEKPKE. Residues 588-651 are spectrin--actin-binding; the sequence is DVKATQQDSP…WDKRLSTHSP (64 aa). Over residues 591-601 the composition is skewed to polar residues; the sequence is ATQQDSPSPTV. Basic and acidic residues predominate over residues 604-613; the sequence is DKVKDLEKTQ. Residues 653–801 are C-terminal (CTD); it reads RTLSFNGQVQ…GVVHQETEIA (149 aa).

Binds with a high affinity to glycophorin and with lower affinity to band III protein. Associates with the nuclear mitotic apparatus. Binds calmodulin. Post-translationally, phosphorylated at multiple sites by different protein kinases and each phosphorylation event selectively modulates the protein's functions. As to expression, found exclusively in photoreceptors following the terminal mitosis of retinal neurons. When retinal synaptogenesis is complete, protein 4.1 is also expressed in the inner retina. In adult amphibian retinas, protein 4.1 is detected in photoreceptors, bipolar cells, and ganglion cell axons.

The protein resides in the nucleus. It is found in the cytoplasm. It localises to the cytoskeleton. The protein localises to the cell cortex. Its function is as follows. Protein 4.1 is a major structural element of the erythrocyte membrane skeleton. It plays a key role in regulating membrane physical properties of mechanical stability and deformability by stabilizing spectrin-actin interaction. May be required for dynein-dynactin complex and NUMA1 recruitment at the mitotic cell cortex during anaphase. The protein is Protein 4.1 of Xenopus laevis (African clawed frog).